A 126-amino-acid polypeptide reads, in one-letter code: Fluoride-specific ion channel FluC (126 aa).

Transmembrane regions (helical) follow at residues 4 to 24 (YLYI…VSGV), 35 to 55 (IGTF…TGLF), 67 to 87 (LLIL…MFES), and 100 to 120 (ALNI…GLAL). Gly-75 and Thr-78 together coordinate Na(+).

It belongs to the fluoride channel Fluc/FEX (TC 1.A.43) family.

The protein resides in the cell inner membrane. The catalysed reaction is fluoride(in) = fluoride(out). With respect to regulation, na(+) is not transported, but it plays an essential structural role and its presence is essential for fluoride channel function. Fluoride-specific ion channel. Important for reducing fluoride concentration in the cell, thus reducing its toxicity. In Maridesulfovibrio salexigens (strain ATCC 14822 / DSM 2638 / NCIMB 8403 / VKM B-1763) (Desulfovibrio salexigens), this protein is Fluoride-specific ion channel FluC.